A 195-amino-acid polypeptide reads, in one-letter code: SXP/RAL-2-like protein 2 (195 aa).

The disordered stretch occupies residues 162 to 195; sequence EKVHGGSHGGLRGGPGGPRDGPRGGPRGGPRGGR. The span at 167–195 shows a compositional bias: gly residues; it reads GSHGGLRGGPGGPRDGPRGGPRGGPRGGR.

This sequence belongs to the SXP/RAL-2 family.

The chain is SXP/RAL-2-like protein 2 from Caenorhabditis elegans.